Here is a 1193-residue protein sequence, read N- to C-terminus: DNA polymerase III subunit alpha (1193 aa).

This sequence belongs to the DNA polymerase type-C family. DnaE subfamily. As to quaternary structure, DNA polymerase III contains a core (composed of alpha, epsilon and theta chains) that associates with a tau subunit. This core dimerizes to form the PolIII' complex. PolIII' associates with the gamma complex (composed of gamma, delta, delta', psi and chi chains) and with the beta chain to form the complete DNA polymerase III complex.

Its subcellular location is the cytoplasm. The catalysed reaction is DNA(n) + a 2'-deoxyribonucleoside 5'-triphosphate = DNA(n+1) + diphosphate. Functionally, DNA polymerase III is a complex, multichain enzyme responsible for most of the replicative synthesis in bacteria. This DNA polymerase also exhibits 3' to 5' exonuclease activity. The alpha chain is the DNA polymerase. This chain is DNA polymerase III subunit alpha (dnaE), found in Xylella fastidiosa (strain Temecula1 / ATCC 700964).